A 442-amino-acid chain; its full sequence is 3-phosphoshikimate 1-carboxyvinyltransferase (442 aa).

Polar residues predominate over residues 1-11; it reads MQVSRPLTVSA. Positions 1–25 are disordered; it reads MQVSRPLTVSASPKGLSGRTRVPGD. 3-phosphoshikimate is bound by residues Lys26, Ser27, and Arg31. Lys26 contributes to the phosphoenolpyruvate binding site. The phosphoenolpyruvate site is built by Gly98 and Arg126. Residues Ser171, Gln173, Asp324, and Lys351 each contribute to the 3-phosphoshikimate site. Gln173 provides a ligand contact to phosphoenolpyruvate. The Proton acceptor role is filled by Asp324. 2 residues coordinate phosphoenolpyruvate: Arg355 and Arg398.

Belongs to the EPSP synthase family. As to quaternary structure, monomer.

It localises to the cytoplasm. It catalyses the reaction 3-phosphoshikimate + phosphoenolpyruvate = 5-O-(1-carboxyvinyl)-3-phosphoshikimate + phosphate. The protein operates within metabolic intermediate biosynthesis; chorismate biosynthesis; chorismate from D-erythrose 4-phosphate and phosphoenolpyruvate: step 6/7. Functionally, catalyzes the transfer of the enolpyruvyl moiety of phosphoenolpyruvate (PEP) to the 5-hydroxyl of shikimate-3-phosphate (S3P) to produce enolpyruvyl shikimate-3-phosphate and inorganic phosphate. The chain is 3-phosphoshikimate 1-carboxyvinyltransferase from Gluconobacter oxydans (strain 621H) (Gluconobacter suboxydans).